Here is a 164-residue protein sequence, read N- to C-terminus: Putative 4-hydroxy-4-methyl-2-oxoglutarate aldolase (164 aa).

Residues G79–L82 and R101 each bind substrate. Residue D102 coordinates a divalent metal cation.

This sequence belongs to the class II aldolase/RraA-like family. Homotrimer. Requires a divalent metal cation as cofactor.

The catalysed reaction is 4-hydroxy-4-methyl-2-oxoglutarate = 2 pyruvate. The enzyme catalyses oxaloacetate + H(+) = pyruvate + CO2. Functionally, catalyzes the aldol cleavage of 4-hydroxy-4-methyl-2-oxoglutarate (HMG) into 2 molecules of pyruvate. Also contains a secondary oxaloacetate (OAA) decarboxylase activity due to the common pyruvate enolate transition state formed following C-C bond cleavage in the retro-aldol and decarboxylation reactions. The protein is Putative 4-hydroxy-4-methyl-2-oxoglutarate aldolase of Halorhodospira halophila (strain DSM 244 / SL1) (Ectothiorhodospira halophila (strain DSM 244 / SL1)).